Reading from the N-terminus, the 482-residue chain is tRNA sulfurtransferase (482 aa).

One can recognise a THUMP domain in the interval 61-165 (LAIRDALTRI…DDRLLLIKGR (105 aa)). ATP-binding positions include 183–184 (LI), lysine 265, glycine 287, and glutamine 296. A disulfide bridge links cysteine 344 with cysteine 456. The region spanning 404-482 (FGPNDVILDI…GFNNVKVYRP (79 aa)) is the Rhodanese domain. The active-site Cysteine persulfide intermediate is the cysteine 456.

The protein belongs to the ThiI family.

It localises to the cytoplasm. It carries out the reaction [ThiI sulfur-carrier protein]-S-sulfanyl-L-cysteine + a uridine in tRNA + 2 reduced [2Fe-2S]-[ferredoxin] + ATP + H(+) = [ThiI sulfur-carrier protein]-L-cysteine + a 4-thiouridine in tRNA + 2 oxidized [2Fe-2S]-[ferredoxin] + AMP + diphosphate. The catalysed reaction is [ThiS sulfur-carrier protein]-C-terminal Gly-Gly-AMP + S-sulfanyl-L-cysteinyl-[cysteine desulfurase] + AH2 = [ThiS sulfur-carrier protein]-C-terminal-Gly-aminoethanethioate + L-cysteinyl-[cysteine desulfurase] + A + AMP + 2 H(+). It participates in cofactor biosynthesis; thiamine diphosphate biosynthesis. Catalyzes the ATP-dependent transfer of a sulfur to tRNA to produce 4-thiouridine in position 8 of tRNAs, which functions as a near-UV photosensor. Also catalyzes the transfer of sulfur to the sulfur carrier protein ThiS, forming ThiS-thiocarboxylate. This is a step in the synthesis of thiazole, in the thiamine biosynthesis pathway. The sulfur is donated as persulfide by IscS. The chain is tRNA sulfurtransferase from Escherichia coli O139:H28 (strain E24377A / ETEC).